The chain runs to 480 residues: Adenosylhomocysteinase (480 aa).

Substrate contacts are provided by T63, D142, and E203. 204-206 contributes to the NAD(+) binding site; that stretch reads TTT. Substrate contacts are provided by K233 and D237. NAD(+)-binding positions include N238, 267-272, E290, N325, 346-348, and N394; these read GYGDVG and IGH.

This sequence belongs to the adenosylhomocysteinase family. Requires NAD(+) as cofactor.

Its subcellular location is the cytoplasm. The enzyme catalyses S-adenosyl-L-homocysteine + H2O = L-homocysteine + adenosine. It functions in the pathway amino-acid biosynthesis; L-homocysteine biosynthesis; L-homocysteine from S-adenosyl-L-homocysteine: step 1/1. Its function is as follows. May play a key role in the regulation of the intracellular concentration of adenosylhomocysteine. The sequence is that of Adenosylhomocysteinase from Xanthomonas euvesicatoria pv. vesicatoria (strain 85-10) (Xanthomonas campestris pv. vesicatoria).